Consider the following 425-residue polypeptide: tRNA(Ile)-lysidine synthase (425 aa).

27 to 32 (SGGLDS) contacts ATP.

It belongs to the tRNA(Ile)-lysidine synthase family.

The protein resides in the cytoplasm. The enzyme catalyses cytidine(34) in tRNA(Ile2) + L-lysine + ATP = lysidine(34) in tRNA(Ile2) + AMP + diphosphate + H(+). Functionally, ligates lysine onto the cytidine present at position 34 of the AUA codon-specific tRNA(Ile) that contains the anticodon CAU, in an ATP-dependent manner. Cytidine is converted to lysidine, thus changing the amino acid specificity of the tRNA from methionine to isoleucine. The sequence is that of tRNA(Ile)-lysidine synthase from Streptococcus gordonii (strain Challis / ATCC 35105 / BCRC 15272 / CH1 / DL1 / V288).